The sequence spans 43 residues: Protein PsbN (43 aa).

A helical transmembrane segment spans residues Thr-5 to Val-25.

It belongs to the PsbN family.

The protein localises to the plastid. It is found in the chloroplast thylakoid membrane. May play a role in photosystem I and II biogenesis. The protein is Protein PsbN of Cyanidioschyzon merolae (strain NIES-3377 / 10D) (Unicellular red alga).